The chain runs to 312 residues: Ribosomal RNA small subunit methyltransferase H (312 aa).

S-adenosyl-L-methionine-binding positions include 35-37 (GGH), Asp55, Phe79, Asp101, and Gln108.

The protein belongs to the methyltransferase superfamily. RsmH family.

The protein localises to the cytoplasm. The catalysed reaction is cytidine(1402) in 16S rRNA + S-adenosyl-L-methionine = N(4)-methylcytidine(1402) in 16S rRNA + S-adenosyl-L-homocysteine + H(+). Functionally, specifically methylates the N4 position of cytidine in position 1402 (C1402) of 16S rRNA. This chain is Ribosomal RNA small subunit methyltransferase H, found in Buchnera aphidicola subsp. Schizaphis graminum (strain Sg).